We begin with the raw amino-acid sequence, 389 residues long: MSSEFISKVDKEARRKAANILRDKFLNLVEQLKKGEPLVMEIPMRTLSNAIYDEKRKLLLLGEKKLRRNFLDLNEAKRFMQTVLMASIIYDALVSDEYPTIRDLYYRGKHSLLLKSIEGNKIVSEENTWDEQKESDSVIVDIEVFTSLLREEMLILSKEKGKVVGNLRIRSGNDVIDLSKTGHGAYAIEPTPDLIDFIDVDAEFVLVVEKDAVFQQLHRAGFWKQYKSILITSAGQPDRATRRFVRRLNEELKLPVYILTDADPYGWYIFSVFRIGSISLSYESERLATPDAKFLGVSMGDIFGNSRKKPYLSEAERKNYIIKAKDADIKRAEEIKNYEWFKTKAWQEEINTFLQRKAKLEIEAMASKGLKFLAFQYIPEKITNKDYIA.

A Topo IIA-type catalytic domain is found at 12-162; it reads EARRKAANIL…MLILSKEKGK (151 aa). Y106 (O-(5'-phospho-DNA)-tyrosine intermediate) is an active-site residue. Residues E209 and D261 each contribute to the Mg(2+) site.

It belongs to the TOP6A family. Homodimer. Heterotetramer of two Top6A and two Top6B chains. It depends on Mg(2+) as a cofactor.

It carries out the reaction ATP-dependent breakage, passage and rejoining of double-stranded DNA.. Its activity is regulated as follows. Not inhibited by the DNA gyrase inhibitor novobiocin, instead inhibited by eukaryotic topoisomerase inhibitors such as m- and o-amsacrine, ellipticine, and the quinolone CP-115,953. In terms of biological role, relaxes both positive and negative supercoils and exhibits a strong decatenase and unknotting activity; it cannot introduce DNA supercoils. ATP is absolutely required for DNA cleavage; the nonhydrolyzable analog AMP-PNP generates nicked or linear products from a supercoiled dsDNA substrate. Generates staggered two-nucleotide long 5' overhangs. The enzyme is covalently attached transiently to the 5'-ends of the cleaved strands. This is Type 2 DNA topoisomerase 6 subunit A from Saccharolobus shibatae (strain ATCC 51178 / DSM 5389 / JCM 8931 / NBRC 15437 / B12) (Sulfolobus shibatae).